The primary structure comprises 22 residues: Heat shock 70-related protein 1, mitochondrial (22 aa).

It belongs to the heat shock protein 70 family.

It localises to the mitochondrion. This is Heat shock 70-related protein 1, mitochondrial from Leishmania tarentolae (Sauroleishmania tarentolae).